Reading from the N-terminus, the 281-residue chain is Phosphatidylglycerol--prolipoprotein diacylglyceryl transferase (281 aa).

The next 4 helical transmembrane spans lie at 23–43, 71–91, 107–127, and 133–153; these read VGPL…LFAW, FVIW…VLFY, WDGG…MILF, and ILVW…LGVV. Residue Arg154 participates in a 1,2-diacyl-sn-glycero-3-phospho-(1'-sn-glycerol) binding. 3 helical membrane-spanning segments follow: residues 189 to 209, 217 to 237, and 247 to 267; these read LYEA…LVWG, GFVA…VEFF, and LFGG…LLGL.

Belongs to the Lgt family.

It localises to the cell inner membrane. It carries out the reaction L-cysteinyl-[prolipoprotein] + a 1,2-diacyl-sn-glycero-3-phospho-(1'-sn-glycerol) = an S-1,2-diacyl-sn-glyceryl-L-cysteinyl-[prolipoprotein] + sn-glycerol 1-phosphate + H(+). It participates in protein modification; lipoprotein biosynthesis (diacylglyceryl transfer). Catalyzes the transfer of the diacylglyceryl group from phosphatidylglycerol to the sulfhydryl group of the N-terminal cysteine of a prolipoprotein, the first step in the formation of mature lipoproteins. This Brucella abortus (strain S19) protein is Phosphatidylglycerol--prolipoprotein diacylglyceryl transferase.